The following is an 82-amino-acid chain: NADH-ubiquinone oxidoreductase 9.5 kDa subunit (82 aa).

The chain crosses the membrane as a helical span at residues 25 to 43 (AYFYSCVIAGLGPVFLTVV).

It belongs to the complex I NDUFA3 subunit family. In terms of assembly, complex I is composed of about 40 different subunits.

Its subcellular location is the mitochondrion inner membrane. Its function is as follows. Accessory subunit of the mitochondrial membrane respiratory chain NADH dehydrogenase (Complex I), that is believed not to be involved in catalysis. Complex I functions in the transfer of electrons from NADH to the respiratory chain. The immediate electron acceptor for the enzyme is believed to be ubiquinone. This subunit binds ubiquinone. The sequence is that of NADH-ubiquinone oxidoreductase 9.5 kDa subunit (nuo9.5) from Neurospora crassa (strain ATCC 24698 / 74-OR23-1A / CBS 708.71 / DSM 1257 / FGSC 987).